A 291-amino-acid chain; its full sequence is Quinol oxidase subunit 2 (291 aa).

A signal peptide spans M1–K28. The next 2 helical transmembrane spans lie at S49–I69 and L91–V111.

The protein belongs to the cytochrome c oxidase subunit 2 family.

The protein localises to the cell membrane. The catalysed reaction is 2 a quinol + O2 = 2 a quinone + 2 H2O. Catalyzes quinol oxidation with the concomitant reduction of oxygen to water. Subunit II transfers the electrons from a quinol to the binuclear center of the catalytic subunit I. This is Quinol oxidase subunit 2 from Bacillus cereus (strain ATCC 14579 / DSM 31 / CCUG 7414 / JCM 2152 / NBRC 15305 / NCIMB 9373 / NCTC 2599 / NRRL B-3711).